A 159-amino-acid polypeptide reads, in one-letter code: Phosphopantetheine adenylyltransferase (159 aa).

Serine 9 contacts substrate. Residues 9–10 (SF) and histidine 17 each bind ATP. Substrate contacts are provided by lysine 41, leucine 73, and lysine 87. ATP contacts are provided by residues 88–90 (GLR), glutamate 98, and 123–129 (NIHISSS).

This sequence belongs to the bacterial CoaD family. Homohexamer. Requires Mg(2+) as cofactor.

The protein resides in the cytoplasm. It catalyses the reaction (R)-4'-phosphopantetheine + ATP + H(+) = 3'-dephospho-CoA + diphosphate. It participates in cofactor biosynthesis; coenzyme A biosynthesis; CoA from (R)-pantothenate: step 4/5. In terms of biological role, reversibly transfers an adenylyl group from ATP to 4'-phosphopantetheine, yielding dephospho-CoA (dPCoA) and pyrophosphate. In Clostridium beijerinckii (strain ATCC 51743 / NCIMB 8052) (Clostridium acetobutylicum), this protein is Phosphopantetheine adenylyltransferase.